Reading from the N-terminus, the 381-residue chain is Secretion apparatus protein BsaZ (381 aa).

4 consecutive transmembrane segments (helical) span residues 28–48, 80–100, 134–154, and 175–195; these read IVAL…VDLT, IAAP…LVQS, AVKA…FADL, and IVLT…VLIV. Positions 343-381 are disordered; it reads NRGGPPREMPPEATHAPDAHGGDAASGGATSAQAGERNA. Residues 364–381 are compositionally biased toward low complexity; sequence GDAASGGATSAQAGERNA.

This sequence belongs to the type III secretion exporter family.

It localises to the cell membrane. In terms of biological role, part of the bsa type III secretion system, is involved in the intracellular replication of invading bacteria inside the host cell. Probably necessary for the lysis of the vacuole membrane and escape into the host cell cytoplasm. The chain is Secretion apparatus protein BsaZ (bsaZ) from Burkholderia thailandensis (strain ATCC 700388 / DSM 13276 / CCUG 48851 / CIP 106301 / E264).